A 127-amino-acid polypeptide reads, in one-letter code: Large ribosomal subunit protein bL17 (127 aa).

Belongs to the bacterial ribosomal protein bL17 family. Part of the 50S ribosomal subunit. Contacts protein L32.

The chain is Large ribosomal subunit protein bL17 from Actinobacillus pleuropneumoniae serotype 7 (strain AP76).